The primary structure comprises 286 residues: Homoserine kinase (286 aa).

An ATP-binding site is contributed by 78–88 (PLARGLGSSSS).

This sequence belongs to the GHMP kinase family. Homoserine kinase subfamily.

The protein resides in the cytoplasm. The enzyme catalyses L-homoserine + ATP = O-phospho-L-homoserine + ADP + H(+). Its pathway is amino-acid biosynthesis; L-threonine biosynthesis; L-threonine from L-aspartate: step 4/5. Catalyzes the ATP-dependent phosphorylation of L-homoserine to L-homoserine phosphate. This Streptococcus equi subsp. zooepidemicus (strain H70) protein is Homoserine kinase.